The chain runs to 124 residues: Small ribosomal subunit protein uS12 (124 aa).

Asp-89 carries the post-translational modification 3-methylthioaspartic acid.

It belongs to the universal ribosomal protein uS12 family. In terms of assembly, part of the 30S ribosomal subunit. Contacts proteins S8 and S17. May interact with IF1 in the 30S initiation complex.

In terms of biological role, with S4 and S5 plays an important role in translational accuracy. Its function is as follows. Interacts with and stabilizes bases of the 16S rRNA that are involved in tRNA selection in the A site and with the mRNA backbone. Located at the interface of the 30S and 50S subunits, it traverses the body of the 30S subunit contacting proteins on the other side and probably holding the rRNA structure together. The combined cluster of proteins S8, S12 and S17 appears to hold together the shoulder and platform of the 30S subunit. This Shewanella halifaxensis (strain HAW-EB4) protein is Small ribosomal subunit protein uS12.